A 769-amino-acid polypeptide reads, in one-letter code: Endothelin-converting enzyme 1 (769 aa).

At 1-67 (MRTVWSPLAA…WAARTSVEKR (67 aa)) the chain is on the cytoplasmic side. Residue Thr-24 is modified to Phosphothreonine. The chain crosses the membrane as a helical; Signal-anchor for type II membrane protein span at residues 68 to 88 (LVVLVTLLAAGLVACLAALGI). The Extracellular segment spans residues 89–769 (QYQTRTPPVC…MNPHHKCEVW (681 aa)). One can recognise a Peptidase M13 domain in the interval 97–769 (VCLTEACVSV…MNPHHKCEVW (673 aa)). 5 cysteine pairs are disulfide-bonded: Cys-98/Cys-103, Cys-121/Cys-754, Cys-129/Cys-714, Cys-184/Cys-434, and Cys-643/Cys-766. 8 N-linked (GlcNAc...) asparagine glycosylation sites follow: Asn-165, Asn-186, Asn-209, Asn-269, Asn-315, Asn-361, Asn-382, and Asn-538. His-606 is a Zn(2+) binding site. Residue Glu-607 is part of the active site. His-610 is a binding site for Zn(2+). N-linked (GlcNAc...) asparagine glycans are attached at residues Asn-631 and Asn-650. Glu-666 is a Zn(2+) binding site. Asp-670 (proton donor) is an active-site residue.

This sequence belongs to the peptidase M13 family. Homodimer; disulfide-linked. Interacts with PPP1R16B. Interacts with TSPAN8; this interaction recruits the endothelin converting enzyme ECE1 to tetraspanin-enriched microdomains and positively modulates its enzymatic activity. The cofactor is Zn(2+).

It is found in the cell membrane. It catalyses the reaction Hydrolysis of the 21-Trp-|-Val-22 bond in big endothelin to form endothelin 1.. Inhibited by phosphoramidon. Its function is as follows. Converts big endothelin-1 to endothelin-1. The sequence is that of Endothelin-converting enzyme 1 (Ece1) from Mus musculus (Mouse).